A 445-amino-acid chain; its full sequence is Methionine aminopeptidase 2 (445 aa).

The disordered stretch occupies residues methionine 1–arginine 80. The segment covering alanine 57–threonine 71 has biased composition (basic residues). Histidine 195 is a substrate binding site. Aspartate 215, aspartate 226, and histidine 295 together coordinate a divalent metal cation. Histidine 303 serves as a coordination point for substrate. A divalent metal cation is bound by residues glutamate 331 and glutamate 426.

This sequence belongs to the peptidase M24A family. Methionine aminopeptidase eukaryotic type 2 subfamily. The cofactor is Co(2+). Zn(2+) is required as a cofactor. It depends on Mn(2+) as a cofactor. Fe(2+) serves as cofactor.

The protein resides in the cytoplasm. The catalysed reaction is Release of N-terminal amino acids, preferentially methionine, from peptides and arylamides.. In terms of biological role, cotranslationally removes the N-terminal methionine from nascent proteins. The N-terminal methionine is often cleaved when the second residue in the primary sequence is small and uncharged (Met-Ala-, Cys, Gly, Pro, Ser, Thr, or Val). The chain is Methionine aminopeptidase 2 from Paracoccidioides brasiliensis (strain Pb18).